We begin with the raw amino-acid sequence, 802 residues long: Phenylalanine--tRNA ligase beta subunit (802 aa).

The 110-residue stretch at 40–149 (RPELDFVKIV…EGAEIGKTIR (110 aa)) folds into the tRNA-binding domain. The B5 domain occupies 407–484 (HKEVRIHTDI…RTRGYDTIQV (78 aa)). Positions 462, 468, 471, and 472 each coordinate Mg(2+). An FDX-ACB domain is found at 710–802 (SQFPEAEIDI…LAGKNGFVLR (93 aa)).

The protein belongs to the phenylalanyl-tRNA synthetase beta subunit family. Type 1 subfamily. In terms of assembly, tetramer of two alpha and two beta subunits. Requires Mg(2+) as cofactor.

It is found in the cytoplasm. The catalysed reaction is tRNA(Phe) + L-phenylalanine + ATP = L-phenylalanyl-tRNA(Phe) + AMP + diphosphate + H(+). The chain is Phenylalanine--tRNA ligase beta subunit from Leptospira borgpetersenii serovar Hardjo-bovis (strain L550).